We begin with the raw amino-acid sequence, 800 residues long: MKFTIGWLKDHLDTQASVADIAEKLTALGLEVDAIEDPTAALAPFVVGHVIEAGPHPDADRLKLCRVDSGTDILQIVCGAPNARTGLKVALALPGAVIPATGDVLKKGKIRGIESQGMMCSTRELGLGEDHDGIIELPADTPVGVPLVDVLALDPVIDIAITPNRADALGVRGIARDLAAGGLGGVIADTLTAIPGRFPSPIGVAIDPETLASGACSHYVGRYFRGVRNGESPAWLKDRLNAIGVRPISLLVDITNYVTFDRARPLHVFDADKLTGTTITARPARQGEILRALDGRSYTLDAPVVAIADGAGPQGLGGIMGGEDTGVDENTVNVFLESALFDPANTAAAGRFLGIDSDARYRFERGVDPESCLLGAELATRMILDLCGGEASELVIAGAPPVWRRTIALRPARVARLGGVAVERAEMVAKLRALGCTVEDDGAEALRVDPPSWRVDIGAEHDLIEEVVRLHGFDLVPAVPLPRDPMPKAVLTPGQRRMITVKRTLATRGMLEAVTWSFLPRAVAKGFGGGQDALVLANPISSDLDAMRPSILPNLIAAAGRNAARGYGDLGLFEVGPRFHGGEPGQQTLVAAGLRAGKIAPRHWSRPARDADLYDIKADVLAAIEAAGAPTASLQVSADAPAWFHPGRSGQIRLGRTVLAAFGEIHPAALALLDVKGPMVGFELDLDALPLPKGRPSKTRPPLTLSPFQPVARDFAFVVEAGVAGDAVIKAARGADKALITDVVIFDVYQGDRLEAGRKSLALSVTLQPTDHTLSDEEIEAVSARIVGAVTKLTGGSLRS.

The tRNA-binding domain occupies 39–148; that stretch reads TAALAPFVVG…ADTPVGVPLV (110 aa). The B5 domain occupies 402–478; sequence VWRRTIALRP…RLHGFDLVPA (77 aa). 4 residues coordinate Mg(2+): Asp-456, Asp-462, Glu-465, and Glu-466. Residues 706–799 form the FDX-ACB domain; that stretch reads SPFQPVARDF…VTKLTGGSLR (94 aa).

This sequence belongs to the phenylalanyl-tRNA synthetase beta subunit family. Type 1 subfamily. As to quaternary structure, tetramer of two alpha and two beta subunits. Mg(2+) serves as cofactor.

It localises to the cytoplasm. The enzyme catalyses tRNA(Phe) + L-phenylalanine + ATP = L-phenylalanyl-tRNA(Phe) + AMP + diphosphate + H(+). The protein is Phenylalanine--tRNA ligase beta subunit of Rhodospirillum rubrum (strain ATCC 11170 / ATH 1.1.1 / DSM 467 / LMG 4362 / NCIMB 8255 / S1).